The chain runs to 720 residues: Glutaryl-7-aminocephalosporanic-acid acylase (720 aa).

An N-terminal signal peptide occupies residues Met1–Ala29. A propeptide spans Glu188 to Gly198 (spacer peptide). The active-site Nucleophile is Ser199. Residues His221 and Glu653 contribute to the active site.

The protein belongs to the peptidase S45 family. Heterodimer of a small subunit and a large subunit processed from the same precursor.

It localises to the periplasm. It carries out the reaction (7R)-7-(4-carboxybutanamido)cephalosporanate + H2O = (7R)-7-aminocephalosporanate + glutarate. Functionally, catalyzes the deacylation of 7 beta-(4-carboxybutanamido)cephalosporanic acid (glutaryl-7-aminocephalosporanic acid or GL-7-ACA) to 7-aminocephalosporanic acid (7-ACA). Cannot efficiently use cephalosporin C (CPC), penicillin G, or ampicillin as substrates. This chain is Glutaryl-7-aminocephalosporanic-acid acylase, found in Brevundimonas diminuta (Pseudomonas diminuta).